The primary structure comprises 294 residues: NADH-cytochrome b5 reductase 2 (294 aa).

Residues 11-27 traverse the membrane as a helical segment; it reads VLLPVVAAATSIGLVYH. In terms of domain architecture, FAD-binding FR-type spans 45–149; the sequence is DEWIDLKLKK…KGPIVKWKWE (105 aa). 152 to 187 contributes to the FAD binding site; it reads QFQSIALIGGGTGITPLYQLLHEITKNPEDKTKVKL.

The protein belongs to the flavoprotein pyridine nucleotide cytochrome reductase family. The cofactor is FAD.

The protein localises to the mitochondrion outer membrane. It catalyses the reaction 2 Fe(III)-[cytochrome b5] + NADH = 2 Fe(II)-[cytochrome b5] + NAD(+) + H(+). Its function is as follows. May mediate the reduction of outer membrane cytochrome b5. The polypeptide is NADH-cytochrome b5 reductase 2 (MCR1) (Meyerozyma guilliermondii (strain ATCC 6260 / CBS 566 / DSM 6381 / JCM 1539 / NBRC 10279 / NRRL Y-324) (Yeast)).